We begin with the raw amino-acid sequence, 543 residues long: Ribosomal protein arginine N-methyltransferase rmt3 (543 aa).

The C2H2-type zinc-finger motif lies at 58-81 (FCCLFCDSTFTCLKDLWSHCKEAH). In terms of domain architecture, SAM-dependent MTase PRMT-type spans 217–543 (DSYYFESYAG…KADSQSYVLN (327 aa)). Residues Arg-239, Gly-263, Asp-285, Ser-287, Ile-313, and Glu-314 each coordinate S-adenosyl-L-homocysteine. Catalysis depends on residues Glu-329 and Glu-338.

It belongs to the class I-like SAM-binding methyltransferase superfamily. Protein arginine N-methyltransferase family. As to quaternary structure, interacts with ef1a-c, rps2 and rps24. Note=Associates with the 40S ribosomal particle.

It is found in the cytoplasm. The protein resides in the cytosol. The catalysed reaction is L-arginyl-[protein] + S-adenosyl-L-methionine = N(omega)-methyl-L-arginyl-[protein] + S-adenosyl-L-homocysteine + H(+). The enzyme catalyses L-arginyl-[protein] + 2 S-adenosyl-L-methionine = N(omega),N(omega)-dimethyl-L-arginyl-[protein] + 2 S-adenosyl-L-homocysteine + 2 H(+). In terms of biological role, methylates (mono and asymmetric dimethylation) the guanidino nitrogens of arginyl residues in ribosomal protein rps2. The polypeptide is Ribosomal protein arginine N-methyltransferase rmt3 (rmt3) (Schizosaccharomyces pombe (strain 972 / ATCC 24843) (Fission yeast)).